A 367-amino-acid chain; its full sequence is 3-dehydroquinate synthase (367 aa).

NAD(+)-binding positions include 69–74 (DGEAFK), 103–107 (GVIGD), 127–128 (TT), Lys-140, and Lys-149. The Zn(2+) site is built by Glu-182, His-245, and His-262.

The protein belongs to the sugar phosphate cyclases superfamily. Dehydroquinate synthase family. Requires Co(2+) as cofactor. Zn(2+) is required as a cofactor. The cofactor is NAD(+).

It localises to the cytoplasm. It catalyses the reaction 7-phospho-2-dehydro-3-deoxy-D-arabino-heptonate = 3-dehydroquinate + phosphate. The protein operates within metabolic intermediate biosynthesis; chorismate biosynthesis; chorismate from D-erythrose 4-phosphate and phosphoenolpyruvate: step 2/7. Catalyzes the conversion of 3-deoxy-D-arabino-heptulosonate 7-phosphate (DAHP) to dehydroquinate (DHQ). In Pseudomonas syringae pv. syringae (strain B728a), this protein is 3-dehydroquinate synthase.